A 201-amino-acid chain; its full sequence is Small ribosomal subunit protein uS4 (201 aa).

The tract at residues 1–46 (MARYTGPRSRISRRFGEPVMGDSKALQKKNYAPGMHGRNKKRKQSE) is disordered. Residues 92–151 (ARLDNTVYRLGIASSRRAARQLVIHKHIVVNGDVVNIPSYQLKPGDQLGVREKSKSIEAI) enclose the S4 RNA-binding domain.

Belongs to the universal ribosomal protein uS4 family. As to quaternary structure, part of the 30S ribosomal subunit. Contacts protein S5. The interaction surface between S4 and S5 is involved in control of translational fidelity.

One of the primary rRNA binding proteins, it binds directly to 16S rRNA where it nucleates assembly of the body of the 30S subunit. In terms of biological role, with S5 and S12 plays an important role in translational accuracy. The chain is Small ribosomal subunit protein uS4 from Cytophaga hutchinsonii (strain ATCC 33406 / DSM 1761 / CIP 103989 / NBRC 15051 / NCIMB 9469 / D465).